Reading from the N-terminus, the 164-residue chain is Transcriptional repressor NrdR (164 aa).

A zinc finger spans residues Cys-3–Cys-34. In terms of domain architecture, ATP-cone spans Leu-46 to Asp-136.

Belongs to the NrdR family. Requires Zn(2+) as cofactor.

Functionally, negatively regulates transcription of bacterial ribonucleotide reductase nrd genes and operons by binding to NrdR-boxes. The chain is Transcriptional repressor NrdR from Micrococcus luteus (strain ATCC 4698 / DSM 20030 / JCM 1464 / CCM 169 / CCUG 5858 / IAM 1056 / NBRC 3333 / NCIMB 9278 / NCTC 2665 / VKM Ac-2230) (Micrococcus lysodeikticus).